A 345-amino-acid polypeptide reads, in one-letter code: Calcium uniporter regulatory subunit MCUb, mitochondrial (345 aa).

The transit peptide at 1–44 (MPGALSGRRMLPSGLCLGRWQLLRTIRARGRGDPRELPSTPQVL) directs the protein to the mitochondrion. The stretch at 188–221 (EIQKRRERHLMAKIDHLQEQLRPLEQVKAAIEAR) forms a coiled coil. The next 2 helical transmembrane spans lie at 229–249 (LLWAGLALLSVQGGALAWLTW) and 259–279 (PVTFFLSFANSIVFFAYFIIT). Residues 306-334 (FDVEQYNKLKEDLAEATESLESVRRSLRL) are a coiled coil.

The protein belongs to the MCU (TC 1.A.77) family. In terms of assembly, homooligomer. Associates with the uniplex complex, composed of MCU, MICU1, MICU2 and EMRE/SMDT1, inhibiting its activity. In terms of tissue distribution, detected in lung, brain and heart, and at lower levels in white fat, skeletal muscle and spleen. Detected at very low levels in kidney and liver. Highly expressed in macrophages during the progression of skeletal muscle regeneration.

Its subcellular location is the mitochondrion inner membrane. Functionally, negative regulator of the mitochondrial calcium uniporter (MCU), a channel that mediates calcium uptake into the mitochondrial matrix. MCUB is required to limit mitochondrial calcium overload during stress. Acts as a dominant-negative regulator that displaces MCU from the functional uniplex complex and thereby decreases the association of calcium sensors MICU1 and MICU2, preventing channel gating. Mitochondrial calcium homeostasis plays key roles in mitochondrial metabolism. Acts as an important regulator of mitochondrial metabolism in response to stress in muscle cells: induced in response to fasting, leading to restrict mitochondrial calcium uptake, resulting in reprogramming of mitochondria toward fatty acid oxidation preference. Acts as a regulator of macrophage polarization during skeletal muscle regeneration: inhibition of mitochondrial calcium uptake drives differentiation of macrophages with anti-inflammatory profile, promoting the differentiation and fusion of satellite cells. The sequence is that of Calcium uniporter regulatory subunit MCUb, mitochondrial from Mus musculus (Mouse).